Consider the following 489-residue polypeptide: Glutamyl-tRNA(Gln) amidotransferase subunit A (489 aa).

Active-site charge relay system residues include lysine 78 and serine 153. Serine 177 serves as the catalytic Acyl-ester intermediate.

It belongs to the amidase family. GatA subfamily. In terms of assembly, heterotrimer of A, B and C subunits.

It carries out the reaction L-glutamyl-tRNA(Gln) + L-glutamine + ATP + H2O = L-glutaminyl-tRNA(Gln) + L-glutamate + ADP + phosphate + H(+). Functionally, allows the formation of correctly charged Gln-tRNA(Gln) through the transamidation of misacylated Glu-tRNA(Gln) in organisms which lack glutaminyl-tRNA synthetase. The reaction takes place in the presence of glutamine and ATP through an activated gamma-phospho-Glu-tRNA(Gln). The polypeptide is Glutamyl-tRNA(Gln) amidotransferase subunit A (Nitratidesulfovibrio vulgaris (strain DP4) (Desulfovibrio vulgaris)).